The chain runs to 295 residues: N-acetylmuramic acid 6-phosphate etherase (295 aa).

The 164-residue stretch at 55–218 (AADALKQGGR…STGAMVKLGK (164 aa)) folds into the SIS domain. Catalysis depends on E83, which acts as the Proton donor. E114 is a catalytic residue.

This sequence belongs to the GCKR-like family. MurNAc-6-P etherase subfamily. Homodimer.

It carries out the reaction N-acetyl-D-muramate 6-phosphate + H2O = N-acetyl-D-glucosamine 6-phosphate + (R)-lactate. It participates in amino-sugar metabolism; 1,6-anhydro-N-acetylmuramate degradation. It functions in the pathway amino-sugar metabolism; N-acetylmuramate degradation. The protein operates within cell wall biogenesis; peptidoglycan recycling. Specifically catalyzes the cleavage of the D-lactyl ether substituent of MurNAc 6-phosphate, producing GlcNAc 6-phosphate and D-lactate. Together with AnmK, is also required for the utilization of anhydro-N-acetylmuramic acid (anhMurNAc) either imported from the medium or derived from its own cell wall murein, and thus plays a role in cell wall recycling. The polypeptide is N-acetylmuramic acid 6-phosphate etherase (Yersinia pseudotuberculosis serotype O:1b (strain IP 31758)).